We begin with the raw amino-acid sequence, 688 residues long: Glycine--tRNA ligase beta subunit (688 aa).

It belongs to the class-II aminoacyl-tRNA synthetase family. As to quaternary structure, tetramer of two alpha and two beta subunits.

It is found in the cytoplasm. The enzyme catalyses tRNA(Gly) + glycine + ATP = glycyl-tRNA(Gly) + AMP + diphosphate. The polypeptide is Glycine--tRNA ligase beta subunit (Shewanella sp. (strain MR-4)).